A 469-amino-acid polypeptide reads, in one-letter code: 3-isopropylmalate dehydratase large subunit (469 aa).

The [4Fe-4S] cluster site is built by Cys-350, Cys-410, and Cys-413.

This sequence belongs to the aconitase/IPM isomerase family. LeuC type 1 subfamily. As to quaternary structure, heterodimer of LeuC and LeuD. The cofactor is [4Fe-4S] cluster.

The enzyme catalyses (2R,3S)-3-isopropylmalate = (2S)-2-isopropylmalate. It participates in amino-acid biosynthesis; L-leucine biosynthesis; L-leucine from 3-methyl-2-oxobutanoate: step 2/4. Catalyzes the isomerization between 2-isopropylmalate and 3-isopropylmalate, via the formation of 2-isopropylmaleate. The protein is 3-isopropylmalate dehydratase large subunit of Rhizobium johnstonii (strain DSM 114642 / LMG 32736 / 3841) (Rhizobium leguminosarum bv. viciae).